Here is a 628-residue protein sequence, read N- to C-terminus: Biosynthetic arginine decarboxylase (628 aa).

Residue Lys-99 is modified to N6-(pyridoxal phosphate)lysine. 279 to 289 (VDVGGGLGIDY) serves as a coordination point for substrate.

This sequence belongs to the Orn/Lys/Arg decarboxylase class-II family. SpeA subfamily. Mg(2+) serves as cofactor. It depends on pyridoxal 5'-phosphate as a cofactor.

It carries out the reaction L-arginine + H(+) = agmatine + CO2. Functionally, catalyzes the biosynthesis of agmatine from arginine. This Xylella fastidiosa (strain 9a5c) protein is Biosynthetic arginine decarboxylase.